The chain runs to 350 residues: MDKEKLKAIEAAMGNIEKQFGKGSVMKLGEKNILDIEAISTGCLGMDIALGIGGVPKGRIVEIYGPESSGKTTVALHIIAEAQKNGGVAAFIDAEHALDPSYARKLGVDIDNLIVSQPDTGEQGLEIAEALVRSNAIDIVVVDSVAALVPKAEIQGEMGDSHVGLQARLMSQALRKLAGSINKSNCVAIFINQLREKVGIMFGSPETTPGGRALKFYSSVRLDVRRIDTIKQGDEFLGNRTRVKVTKNKVAPPFKNAEFDIMYNEGISRTGDVLDLGVKEEIVQKSGSWFSYNDVRLGQGRENAKQFLKDNPELLYEIENTIREKYDLPIVKNNIKAEVEDKKEKKAEEV.

Residue 65 to 72 (GPESSGKT) coordinates ATP.

This sequence belongs to the RecA family.

The protein localises to the cytoplasm. Its function is as follows. Can catalyze the hydrolysis of ATP in the presence of single-stranded DNA, the ATP-dependent uptake of single-stranded DNA by duplex DNA, and the ATP-dependent hybridization of homologous single-stranded DNAs. It interacts with LexA causing its activation and leading to its autocatalytic cleavage. In Clostridium tetani (strain Massachusetts / E88), this protein is Protein RecA.